The following is a 391-amino-acid chain: Formate-dependent phosphoribosylglycinamide formyltransferase (391 aa).

Residues 18–19 (EL) and glutamate 78 each bind N(1)-(5-phospho-beta-D-ribosyl)glycinamide. Residues arginine 110, lysine 151, 156 to 161 (SSGKGQ), 191 to 194 (EEFI), and glutamate 199 each bind ATP. In terms of domain architecture, ATP-grasp spans 115–305 (ELAAQQLGVR…EFELHLRAIL (191 aa)). Mg(2+)-binding residues include glutamate 264 and glutamate 276. N(1)-(5-phospho-beta-D-ribosyl)glycinamide-binding positions include aspartate 283, lysine 353, and 360–361 (RR).

This sequence belongs to the PurK/PurT family. Homodimer.

It carries out the reaction N(1)-(5-phospho-beta-D-ribosyl)glycinamide + formate + ATP = N(2)-formyl-N(1)-(5-phospho-beta-D-ribosyl)glycinamide + ADP + phosphate + H(+). The protein operates within purine metabolism; IMP biosynthesis via de novo pathway; N(2)-formyl-N(1)-(5-phospho-D-ribosyl)glycinamide from N(1)-(5-phospho-D-ribosyl)glycinamide (formate route): step 1/1. Involved in the de novo purine biosynthesis. Catalyzes the transfer of formate to 5-phospho-ribosyl-glycinamide (GAR), producing 5-phospho-ribosyl-N-formylglycinamide (FGAR). Formate is provided by PurU via hydrolysis of 10-formyl-tetrahydrofolate. The sequence is that of Formate-dependent phosphoribosylglycinamide formyltransferase from Synechocystis sp. (strain ATCC 27184 / PCC 6803 / Kazusa).